The following is a 368-amino-acid chain: MWIKELELKHYRNYDHLLASFSSGLNVFIGNNAQGKTNFLEAIYFLSLTRSHRTRADKELIHFDHSTVSLTGKIQRISGTVDLEINLSDKGRVTKINALKQAKLSDYIGTMMVVLFAPEDLQLVKGAPSLRRKFIDIDLGQIKPVYLSELSHYNHVLKQRNSYLKSAQQIDAAFLAVLDEQLAGYGARVMEHRIDFINALEKEANTHHQAISNGLESLSLSYQSSVVFDKKTNIYQQFLHQLEKNHQKDFFRKNTSVGPHRDDLAFYINGMNANFASQGQHRSLILSLKMAEVSLMKALTGDNPILLLDDVMSELDNTRQTKLLETVIKENVQTFITTTSLDHLSQLPEGIHIFHVTKGTVQIDSDIH.

30–37 (GNNAQGKT) is an ATP binding site.

Belongs to the RecF family.

It localises to the cytoplasm. Functionally, the RecF protein is involved in DNA metabolism; it is required for DNA replication and normal SOS inducibility. RecF binds preferentially to single-stranded, linear DNA. It also seems to bind ATP. This Streptococcus pyogenes serotype M5 (strain Manfredo) protein is DNA replication and repair protein RecF.